We begin with the raw amino-acid sequence, 1520 residues long: MTYNQMPKAQGLYRPEFEHDACGIGLYAHLKGKQTHDIVKQGLKMLCQLDHRGGQGSDPDTGDGAGLLVQIPDAFFRKECKNINLPEKERYGVGMVFFSQKEDERKKIEKQINALIEQEGQVVLGWRTVPVNVGKIGTVAQKSCPFVRQVFIGASSDLKDNLSFERKLYVIRKQAENWGVTEGLDFYFASLSSQTIVYKGLLTPEQVDAFYSDLQDEAFVSAFALVHSRFSTNTFPTWERAHPNRYLVHNGEINTLRGNINWMRAREQQFVSESFGEDLNKILPILNADGSDSSILDNAFEFFVMAGRKPAHTAMMLIPEPWTENTHMSKEKRAFYEYHSSLMEPWDGPTAISFTDGKQIGAILDRNGLRPARYYVTKDDYIIFSSEVGVIEVEQENVLYKNRLEPGKMLLIDLEEGRIISDEEVKTQIATEYPYQKWLEEELVQVNPDPESREEEQFSDLLTRQKAFGYTYEDIQKYLIPVIKEGKDPLGSMGNDAPLAVLSDRAQSLFNYFKQLFAQVTNPPIDAIREQLVTSTMTWLGAEGDLLHPSERNVRRIKLYTPVLSNEQFYALKTIVHPDLKSQKIDVLFSEDLERGLKDMFTQAEKAISQGVSLLILSDKKMNERLTPIPPLLAVSALHQHLIRKGLRTKVSIIVESGEAREVHHFAALIGYGADAINPYLAYATYKQEIDEGRLDISYEEAVSKYGKSITEGVVKVMSKMGISTVQSYRGAQIFEAVGISRDVIDRYFSGTASQLGGIDLQTIAEEAQRRHREAYQDDYSKTLEPGSDFQWRNGGEHHAFNPKTIHTLQWACRRNDYNLFKQYTKAADEERIGFLRNLFAFDGNRKPLKLEEVESAESIVKRFKTGAMSFGSLSKEAHEALAIAMNRLGGKSNSGEGGEDPKRFVPDENGDDRRSAIKQIASGRFGVKSHYLVNADELQIKMAQGAKPGEGGQLPGNKVYPWVADVRGSTPGVGLISPPPHHDIYSIEDLAQLIHDLKNANRDARISVKLVSKAGVGTIAAGVAKATADVIVISGYDGGTGASPKTSIKHTGLPWELGLAEAHQTLMLNGLRDRVVLETDGKLMTGRDVVMAALLGAEEFGFATAPLVVLGCVMMRACHLDTCPVGVATQNPELRKKFMGDPDHIVNYMLFIAEEVREYMAALGFKTFDEMIGRTDVLHASERAKEHWKASQLDLSTLLYQPEGVRTFQSPQNHKIDQSLDITTILPAVQEAIESGKEADISIEINNTNRVAGTITGSEISKRYGEEGLPEDTIKLHFTGSAGQSFGAFVPKGMTLYLDGDSNDYVGKGLSGGKIIVKSSEGFNSASDDNVIIGNVAFYGATSGEAYINGRAGERFAVRNSGVNVVVEGIGDHGCEYMTGGSVVVLGDVGKNFAAGMSGGIAYVLTEDVKAFKRKCNLEMILFESLEDEKEIQQIKAMLERHTAYTNSQKAEDLLDQWEDSVKKFVKVIPKNYKQMLASIEEQKAAGLSDEEAIMFAFEANTKPKQNTAASGQKQAVVQ.

Cysteine 22 serves as the catalytic For GATase activity. A Glutamine amidotransferase type-2 domain is found at 22-415 (CGIGLYAHLK…PGKMLLIDLE (394 aa)). Positions 890 to 913 (GGKSNSGEGGEDPKRFVPDENGDD) are disordered. Residues 900–913 (EDPKRFVPDENGDD) show a composition bias toward basic and acidic residues. 1060–1112 (LAEAHQTLMLNGLRDRVVLETDGKLMTGRDVVMAALLGAEEFGFATAPLVVLG) is an FMN binding site. Positions 1113, 1119, and 1124 each coordinate [3Fe-4S] cluster.

Belongs to the glutamate synthase family. Aggregate of 4 catalytic active heterodimers, consisting of a large and a small subunit. [3Fe-4S] cluster serves as cofactor. The cofactor is FAD. Requires FMN as cofactor.

It carries out the reaction 2 L-glutamate + NADP(+) = L-glutamine + 2-oxoglutarate + NADPH + H(+). Its pathway is amino-acid biosynthesis; L-glutamate biosynthesis via GLT pathway; L-glutamate from 2-oxoglutarate and L-glutamine (NADP(+) route): step 1/1. It participates in energy metabolism; nitrogen metabolism. This chain is Glutamate synthase [NADPH] large chain (gltA), found in Bacillus subtilis (strain 168).